The chain runs to 299 residues: MAQLIDGKKLAEDVVSTVKTETEKLVAATGIVPGIAVVIVGEDPASQVYVASKSKKAKECGFHSVQHDLPETASEQELLDLIESLNNDPAIHGILVQLPLPKHIDSGRVIQTISPDKDVDGFHFINVGKLGTGEVETAFVPCTPAGAMIMIERIHGRDLSGLNAVVIGRSNIVGKPMFNLLLAANATVTVAHSRTKDLPAIARTADILVAAVGRPQMVKGDWVKPGATVIDVGINRIPAPERGEGRTRLVGDVDFVEAEKVAGAITPVPGGVGPMTIAMLMANTLTAACRTAGVKKPVF.

NADP(+) is bound by residues 168–170 (GRS), Ser-193, and Ile-234.

It belongs to the tetrahydrofolate dehydrogenase/cyclohydrolase family. In terms of assembly, homodimer.

It carries out the reaction (6R)-5,10-methylene-5,6,7,8-tetrahydrofolate + NADP(+) = (6R)-5,10-methenyltetrahydrofolate + NADPH. The enzyme catalyses (6R)-5,10-methenyltetrahydrofolate + H2O = (6R)-10-formyltetrahydrofolate + H(+). It functions in the pathway one-carbon metabolism; tetrahydrofolate interconversion. Functionally, catalyzes the oxidation of 5,10-methylenetetrahydrofolate to 5,10-methenyltetrahydrofolate and then the hydrolysis of 5,10-methenyltetrahydrofolate to 10-formyltetrahydrofolate. The sequence is that of Bifunctional protein FolD from Brucella anthropi (strain ATCC 49188 / DSM 6882 / CCUG 24695 / JCM 21032 / LMG 3331 / NBRC 15819 / NCTC 12168 / Alc 37) (Ochrobactrum anthropi).